Here is a 414-residue protein sequence, read N- to C-terminus: 2,3-diketo-5-methylthiopentyl-1-phosphate enolase (414 aa).

The Proton acceptor role is filled by K99. Residues K148, K174 to E177, H265, G338, and G360 to G361 contribute to the substrate site. 3 residues coordinate Mg(2+): K174, D176, and E177. K174 carries the post-translational modification N6-carboxylysine.

The protein belongs to the RuBisCO large chain family. Type IV subfamily. As to quaternary structure, homodimer. Requires Mg(2+) as cofactor.

It carries out the reaction 5-methylsulfanyl-2,3-dioxopentyl phosphate = 2-hydroxy-5-methylsulfanyl-3-oxopent-1-enyl phosphate. It participates in amino-acid biosynthesis; L-methionine biosynthesis via salvage pathway; L-methionine from S-methyl-5-thio-alpha-D-ribose 1-phosphate: step 3/6. Catalyzes the enolization of 2,3-diketo-5-methylthiopentyl-1-phosphate (DK-MTP-1-P) into 2-hydroxy-3-keto-5-methylthiopentenyl-1-phosphate (HK-MTPenyl-1-P). This chain is 2,3-diketo-5-methylthiopentyl-1-phosphate enolase, found in Bacillus cereus (strain G9842).